A 481-amino-acid polypeptide reads, in one-letter code: Aspartyl/glutamyl-tRNA(Asn/Gln) amidotransferase subunit B (481 aa).

The protein belongs to the GatB/GatE family. GatB subfamily. In terms of assembly, heterotrimer of A, B and C subunits.

The enzyme catalyses L-glutamyl-tRNA(Gln) + L-glutamine + ATP + H2O = L-glutaminyl-tRNA(Gln) + L-glutamate + ADP + phosphate + H(+). It catalyses the reaction L-aspartyl-tRNA(Asn) + L-glutamine + ATP + H2O = L-asparaginyl-tRNA(Asn) + L-glutamate + ADP + phosphate + 2 H(+). Its function is as follows. Allows the formation of correctly charged Asn-tRNA(Asn) or Gln-tRNA(Gln) through the transamidation of misacylated Asp-tRNA(Asn) or Glu-tRNA(Gln) in organisms which lack either or both of asparaginyl-tRNA or glutaminyl-tRNA synthetases. The reaction takes place in the presence of glutamine and ATP through an activated phospho-Asp-tRNA(Asn) or phospho-Glu-tRNA(Gln). In Prosthecochloris aestuarii (strain DSM 271 / SK 413), this protein is Aspartyl/glutamyl-tRNA(Asn/Gln) amidotransferase subunit B.